Reading from the N-terminus, the 333-residue chain is Putative ketol-acid reductoisomerase 2 (333 aa).

The KARI N-terminal Rossmann domain occupies 1–182; that stretch reads MDKTVLDANL…AIPGGIAVIS (182 aa). Residues 183 to 329 form the KARI C-terminal knotted domain; sequence SFEEEALLDL…KELYKLLGRK (147 aa).

Belongs to the ketol-acid reductoisomerase family.

The catalysed reaction is (2R)-2,3-dihydroxy-3-methylbutanoate + NADP(+) = (2S)-2-acetolactate + NADPH + H(+). The enzyme catalyses (2R,3R)-2,3-dihydroxy-3-methylpentanoate + NADP(+) = (S)-2-ethyl-2-hydroxy-3-oxobutanoate + NADPH + H(+). It participates in amino-acid biosynthesis; L-isoleucine biosynthesis; L-isoleucine from 2-oxobutanoate: step 2/4. The protein operates within amino-acid biosynthesis; L-valine biosynthesis; L-valine from pyruvate: step 2/4. This Saccharolobus solfataricus (strain ATCC 35092 / DSM 1617 / JCM 11322 / P2) (Sulfolobus solfataricus) protein is Putative ketol-acid reductoisomerase 2 (ilvC2).